A 348-amino-acid polypeptide reads, in one-letter code: NADH-ubiquinone oxidoreductase chain 2 (348 aa).

9 helical membrane-spanning segments follow: residues 13-33, 60-80, 93-113, 149-169, 178-197, 202-219, 246-266, 274-294, and 326-346; these read VGLG…WMGL, FLTQ…NAWM, IAST…PMHF, IDPL…GWGG, ILAY…IQYA, LIAL…FLTL, LVLL…KWLI, DLPI…YFYL, and LALF…ILML.

Belongs to the complex I subunit 2 family.

It localises to the mitochondrion inner membrane. It catalyses the reaction a ubiquinone + NADH + 5 H(+)(in) = a ubiquinol + NAD(+) + 4 H(+)(out). In terms of biological role, core subunit of the mitochondrial membrane respiratory chain NADH dehydrogenase (Complex I) that is believed to belong to the minimal assembly required for catalysis. Complex I functions in the transfer of electrons from NADH to the respiratory chain. The immediate electron acceptor for the enzyme is believed to be ubiquinone. The chain is NADH-ubiquinone oxidoreductase chain 2 (MT-ND2) from Cyprinus carpio (Common carp).